The sequence spans 500 residues: Cytochrome P450 2D28 (500 aa).

A heme-binding site is contributed by Cys446.

This sequence belongs to the cytochrome P450 family. It depends on heme as a cofactor.

The protein localises to the endoplasmic reticulum membrane. The protein resides in the microsome membrane. This is Cytochrome P450 2D28 (CYP2D28A) from Mesocricetus auratus (Golden hamster).